Consider the following 449-residue polypeptide: Hyaluronidase (449 aa).

The first 23 residues, 1–23 (MYHLWIKCLAAWIFLKRFNGVHV), serve as a signal peptide directing secretion. 2 disulfides stabilise this stretch: Cys47–Cys340 and Cys211–Cys227. N-linked (GlcNAc...) asparagine glycosylation is found at Asn67 and Asn103. Residue Glu135 is the Proton donor of the active site. Asn153 carries N-linked (GlcNAc...) asparagine glycosylation. A glycan (N-linked (GlcNAc...) asparagine) is linked at Asn357. 3 cysteine pairs are disulfide-bonded: Cys365-Cys376, Cys370-Cys427, and Cys429-Cys438. Asn401 carries N-linked (GlcNAc...) asparagine glycosylation. The region spanning 427–438 (CQCYQGWQGLYC) is the EGF-like domain.

This sequence belongs to the glycosyl hydrolase 56 family. In terms of assembly, monomer. In terms of tissue distribution, expressed by the venom gland.

Its subcellular location is the secreted. The enzyme catalyses Random hydrolysis of (1-&gt;4)-linkages between N-acetyl-beta-D-glucosamine and D-glucuronate residues in hyaluronate.. Functionally, snake venom endo-hyaluronidase that degrades hyaluronan to smaller oligosaccharide fragments. In venom, it is not toxic by itself, but increases the diffusion of other venom proteins by degrading the extracellular matrix. In addition, it displays antiedematogenic activity. The protein is Hyaluronidase of Echis ocellatus (Ocellated saw-scaled viper).